Here is a 112-residue protein sequence, read N- to C-terminus: Large ribosomal subunit protein mL53 (112 aa).

This sequence belongs to the mitochondrion-specific ribosomal protein mL53 family. As to quaternary structure, component of the mitochondrial ribosome large subunit (39S) which comprises a 16S rRNA and about 50 distinct proteins.

The protein resides in the mitochondrion. The polypeptide is Large ribosomal subunit protein mL53 (MRPL53) (Pongo abelii (Sumatran orangutan)).